Reading from the N-terminus, the 154-residue chain is Transcriptional repressor NrdR (154 aa).

A zinc finger spans residues 3 to 34; the sequence is CPFCRHPDSRVIDSRETDEGQAIRRRRSCPEC. The 91-residue stretch at 46-136 folds into the ATP-cone domain; it reads LAVVKRSGVT…VYRSFESADD (91 aa).

Belongs to the NrdR family. The cofactor is Zn(2+).

Its function is as follows. Negatively regulates transcription of bacterial ribonucleotide reductase nrd genes and operons by binding to NrdR-boxes. In Mycobacterium avium (strain 104), this protein is Transcriptional repressor NrdR.